Here is a 553-residue protein sequence, read N- to C-terminus: Arginine--tRNA ligase (553 aa).

Residues 130–140 (ANPTGDLHIGH) carry the 'HIGH' region motif.

This sequence belongs to the class-I aminoacyl-tRNA synthetase family. As to quaternary structure, monomer.

It localises to the cytoplasm. It carries out the reaction tRNA(Arg) + L-arginine + ATP = L-arginyl-tRNA(Arg) + AMP + diphosphate. This is Arginine--tRNA ligase from Staphylococcus aureus (strain MRSA252).